Here is a 215-residue protein sequence, read N- to C-terminus: Cytochrome b6 (215 aa).

The chain crosses the membrane as a helical span at residues 32 to 52 (IFYCLGGITLTCFLVQVATGF). Cys35 is a binding site for heme c. His86 and His100 together coordinate heme b. 3 helical membrane passes run 90 to 110 (ASMM…TGGF), 116 to 136 (LTWV…VTGY), and 186 to 206 (LHTF…FLMI). The heme b site is built by His187 and His202.

Belongs to the cytochrome b family. PetB subfamily. In terms of assembly, the 4 large subunits of the cytochrome b6-f complex are cytochrome b6, subunit IV (17 kDa polypeptide, PetD), cytochrome f and the Rieske protein, while the 4 small subunits are PetG, PetL, PetM and PetN. The complex functions as a dimer. Heme b serves as cofactor. The cofactor is heme c.

The protein localises to the plastid. Its subcellular location is the chloroplast thylakoid membrane. Its function is as follows. Component of the cytochrome b6-f complex, which mediates electron transfer between photosystem II (PSII) and photosystem I (PSI), cyclic electron flow around PSI, and state transitions. The protein is Cytochrome b6 of Citrus sinensis (Sweet orange).